Reading from the N-terminus, the 357-residue chain is tRNA-specific 2-thiouridylase MnmA (357 aa).

Residues 10–17 and I36 each bind ATP; that span reads GISGGVDS. Catalysis depends on C98, which acts as the Nucleophile. The cysteines at positions 98 and 194 are disulfide-linked. G122 contributes to the ATP binding site. The tract at residues 144–146 is interaction with tRNA; that stretch reads KDQ. C194 acts as the Cysteine persulfide intermediate in catalysis. Positions 303-304 are interaction with tRNA; sequence RY.

The protein belongs to the MnmA/TRMU family.

It localises to the cytoplasm. The catalysed reaction is S-sulfanyl-L-cysteinyl-[protein] + uridine(34) in tRNA + AH2 + ATP = 2-thiouridine(34) in tRNA + L-cysteinyl-[protein] + A + AMP + diphosphate + H(+). Catalyzes the 2-thiolation of uridine at the wobble position (U34) of tRNA, leading to the formation of s(2)U34. The polypeptide is tRNA-specific 2-thiouridylase MnmA (Chlorobium phaeovibrioides (strain DSM 265 / 1930) (Prosthecochloris vibrioformis (strain DSM 265))).